The following is a 66-amino-acid chain: Cytochrome c oxidase polypeptide VIII, mitochondrial (66 aa).

The N-terminal 17 residues, 1-17 (MLRYSLQARSALRGVRF), are a transit peptide targeting the mitochondrion. Residues 18 to 38 (SSSHSAPKPGSTIPFYINKKP) lie on the Mitochondrial matrix side of the membrane. A helical transmembrane segment spans residues 39–59 (LPTLLYFGTFGVIFSIPFIVV). Over 60-66 (KYHNRNL) the chain is Mitochondrial intermembrane.

This sequence belongs to the cytochrome c oxidase VIIc family. In terms of assembly, component of the cytochrome c oxidase (complex IV, CIV), a multisubunit enzyme composed of a catalytic core of 3 subunits and several supernumerary subunits. The complex exists as a monomer or a dimer and forms supercomplexes (SCs) in the inner mitochondrial membrane with ubiquinol-cytochrome c oxidoreductase (cytochrome b-c1 complex, complex III, CIII).

It is found in the mitochondrion inner membrane. The protein operates within energy metabolism; oxidative phosphorylation. Functionally, component of the cytochrome c oxidase, the last enzyme in the mitochondrial electron transport chain which drives oxidative phosphorylation. The respiratory chain contains 3 multisubunit complexes succinate dehydrogenase (complex II, CII), ubiquinol-cytochrome c oxidoreductase (cytochrome b-c1 complex, complex III, CIII) and cytochrome c oxidase (complex IV, CIV), that cooperate to transfer electrons derived from NADH and succinate to molecular oxygen, creating an electrochemical gradient over the inner membrane that drives transmembrane transport and the ATP synthase. Cytochrome c oxidase is the component of the respiratory chain that catalyzes the reduction of oxygen to water. Electrons originating from reduced cytochrome c in the intermembrane space (IMS) are transferred via the dinuclear copper A center (CU(A)) of subunit 2 and heme A of subunit 1 to the active site in subunit 1, a binuclear center (BNC) formed by heme A3 and copper B (CU(B)). The BNC reduces molecular oxygen to 2 water molecules using 4 electrons from cytochrome c in the IMS and 4 protons from the mitochondrial matrix. The polypeptide is Cytochrome c oxidase polypeptide VIII, mitochondrial (cox8) (Schizosaccharomyces pombe (strain 972 / ATCC 24843) (Fission yeast)).